Here is a 627-residue protein sequence, read N- to C-terminus: (+)-sabinene synthase, chloroplastic (627 aa).

Residues 1 to 46 (MSVISIVPLASNSCLYKSLMSSTHELKALCRPIATLGMCRRGKSVM) constitute a chloroplast transit peptide. Positions 378, 382, and 530 each coordinate Mg(2+). Residues 378-382 (DDIYD) carry the DDXXD motif motif.

It belongs to the terpene synthase family. Tpsd subfamily. As to quaternary structure, monomer. Mg(2+) serves as cofactor.

It localises to the plastid. It is found in the chloroplast. It carries out the reaction (2E)-geranyl diphosphate = (1R,5R)-sabinene + diphosphate. It functions in the pathway terpene metabolism; oleoresin biosynthesis. In terms of biological role, terpene synthase (TPS) involved in defensive oleoresin formation in conifers in response to insect attack (e.g. white pine weevil P.strobi) or other injury. Produces (+)-sabinene from geranyl diphosphate, but has no activity with geranylgeranyl diphosphate or farnesyl diphosphate. The polypeptide is (+)-sabinene synthase, chloroplastic (TPS-sab) (Picea sitchensis (Sitka spruce)).